The sequence spans 631 residues: Polycomb group protein EMBRYONIC FLOWER 2 (631 aa).

The segment at 324–347 adopts a C2H2-type zinc-finger fold; the sequence is FSCPFCLVKCASFKGLRYHLPSTH. Over residues 424 to 446 the composition is skewed to basic and acidic residues; the sequence is DDAHSVRSEKSRIPPGKHYERIG. The interval 424–465 is disordered; it reads DDAHSVRSEKSRIPPGKHYERIGGAESGQRVPPGTSPADVQS. The segment at 505–583 is VEFS-box; sequence RQFFHSHRAQ…GHIPWACEAF (79 aa).

It belongs to the VEFS (VRN2-EMF2-FIS2-SU(Z)12) family. In terms of assembly, in plants, PcG complexes are probably composed of a member of the EZ family (CLF or MEA), FIE, and a member of the VEFS family (FIS2, VRN2 or EMF2). Binds to ALP1. In terms of tissue distribution, widely expressed throughout the life cycle with higher levels in proliferating tissues. Expressed in both vegetative and the reproductive shoot meristems.

The protein localises to the nucleus. Its function is as follows. Polycomb group (PcG) protein. Involved in flowering processes by repressing unknown target genes and preventing reproductive development. Participates in polycomb group (PcG) protein complex-mediated (probably in complex with EMF1) silencing of the flower homeotic genes AGAMOUS (AG), PISTILLATA (PI), and APETALA3 (AP3), as well as of some regulatory genes such as ABSCISIC ACID INSENSITIVE3 (ABI3), LONG VEGETATIVE PHASE1 (LOV1), and FLOWERING LOCUS C (FLC) during vegetative development, by mediating trimethylation of histone 3 lysine 27 on the AG chromatin (H3K27me3). PcG proteins act by forming multiprotein complexes, which are required to maintain the transcriptionally repressive state of homeotic genes throughout development. PcG proteins are not required to initiate repression, but to maintain it during later stages of development. They probably act via the methylation of histones, rendering chromatin heritably changed in its expressibility. This is Polycomb group protein EMBRYONIC FLOWER 2 (EMF2) from Arabidopsis thaliana (Mouse-ear cress).